Here is a 92-residue protein sequence, read N- to C-terminus: uncharacterized protein (92 aa).

This is an uncharacterized protein from Mycobacterium tuberculosis (strain CDC 1551 / Oshkosh).